The sequence spans 250 residues: Ribonuclease PH (250 aa).

Residues R87 and 125–127 (GTR) each bind phosphate.

This sequence belongs to the RNase PH family. In terms of assembly, homohexameric ring arranged as a trimer of dimers.

The catalysed reaction is tRNA(n+1) + phosphate = tRNA(n) + a ribonucleoside 5'-diphosphate. Phosphorolytic 3'-5' exoribonuclease that plays an important role in tRNA 3'-end maturation. Removes nucleotide residues following the 3'-CCA terminus of tRNAs; can also add nucleotides to the ends of RNA molecules by using nucleoside diphosphates as substrates, but this may not be physiologically important. Probably plays a role in initiation of 16S rRNA degradation (leading to ribosome degradation) during starvation. In Moorella thermoacetica (strain ATCC 39073 / JCM 9320), this protein is Ribonuclease PH.